Here is a 323-residue protein sequence, read N- to C-terminus: Aspartate carbamoyltransferase catalytic subunit (323 aa).

Residues Arg-61 and Thr-62 each contribute to the carbamoyl phosphate site. Lys-89 is an L-aspartate binding site. Carbamoyl phosphate is bound by residues Arg-111, His-144, and Gln-147. The L-aspartate site is built by Arg-184 and Arg-238. Residues Gly-279 and Pro-280 each coordinate carbamoyl phosphate.

It belongs to the aspartate/ornithine carbamoyltransferase superfamily. ATCase family. In terms of assembly, heterododecamer (2C3:3R2) of six catalytic PyrB chains organized as two trimers (C3), and six regulatory PyrI chains organized as three dimers (R2).

It carries out the reaction carbamoyl phosphate + L-aspartate = N-carbamoyl-L-aspartate + phosphate + H(+). It participates in pyrimidine metabolism; UMP biosynthesis via de novo pathway; (S)-dihydroorotate from bicarbonate: step 2/3. Its function is as follows. Catalyzes the condensation of carbamoyl phosphate and aspartate to form carbamoyl aspartate and inorganic phosphate, the committed step in the de novo pyrimidine nucleotide biosynthesis pathway. The chain is Aspartate carbamoyltransferase catalytic subunit from Acaryochloris marina (strain MBIC 11017).